Here is a 311-residue protein sequence, read N- to C-terminus: Malate dehydrogenase (311 aa).

NAD(+) is bound by residues 7–13 (GAAGGIG) and Asp34. Residues Arg81 and Arg87 each coordinate substrate. Residues Asn94 and 117-119 (ITN) each bind NAD(+). Substrate is bound by residues Asn119 and Arg153. The Proton acceptor role is filled by His177. Residue Met227 coordinates NAD(+).

This sequence belongs to the LDH/MDH superfamily. MDH type 1 family. Homodimer.

The enzyme catalyses (S)-malate + NAD(+) = oxaloacetate + NADH + H(+). Functionally, catalyzes the reversible oxidation of malate to oxaloacetate. In Vibrio parahaemolyticus serotype O3:K6 (strain RIMD 2210633), this protein is Malate dehydrogenase.